A 706-amino-acid chain; its full sequence is Vitamin B12-dependent ribonucleoside-diphosphate reductase (706 aa).

One can recognise an ATP-cone domain in the interval 21–109 (AKVRRRDGTL…IYRQRRAELR (89 aa)). Substrate is bound by residues Ser191, 206–207 (GC), Gly235, 389–393 (NPCGE), and 534–538 (PTGTI). Cys207 and Cys402 are disulfide-bonded. Asn389 acts as the Proton acceptor in catalysis. Catalysis depends on Cys391, which acts as the Cysteine radical intermediate. Glu393 acts as the Proton acceptor in catalysis.

This sequence belongs to the ribonucleoside diphosphate reductase class-2 family. Adenosylcob(III)alamin serves as cofactor.

The catalysed reaction is a 2'-deoxyribonucleoside 5'-diphosphate + [thioredoxin]-disulfide + H2O = a ribonucleoside 5'-diphosphate + [thioredoxin]-dithiol. Provides the precursors necessary for DNA synthesis. Catalyzes the biosynthesis of deoxyribonucleotides from the corresponding ribonucleotides. The sequence is that of Vitamin B12-dependent ribonucleoside-diphosphate reductase (nrdZ) from Mycobacterium tuberculosis (strain ATCC 25618 / H37Rv).